A 1376-amino-acid chain; its full sequence is DNA-directed RNA polymerase subunit beta (1376 aa).

It belongs to the RNA polymerase beta chain family. As to quaternary structure, the RNAP catalytic core consists of 2 alpha, 1 beta, 1 beta' and 1 omega subunit. When a sigma factor is associated with the core the holoenzyme is formed, which can initiate transcription.

The enzyme catalyses RNA(n) + a ribonucleoside 5'-triphosphate = RNA(n+1) + diphosphate. DNA-dependent RNA polymerase catalyzes the transcription of DNA into RNA using the four ribonucleoside triphosphates as substrates. The sequence is that of DNA-directed RNA polymerase subunit beta from Methylorubrum extorquens (strain PA1) (Methylobacterium extorquens).